We begin with the raw amino-acid sequence, 423 residues long: Serine--tRNA ligase (423 aa).

Position 228–230 (228–230 (TSE)) interacts with L-serine. Residue 259–261 (RLE) participates in ATP binding. Glutamate 282 serves as a coordination point for L-serine. 346–349 (EISS) contacts ATP. An L-serine-binding site is contributed by serine 384.

It belongs to the class-II aminoacyl-tRNA synthetase family. Type-1 seryl-tRNA synthetase subfamily. As to quaternary structure, homodimer. The tRNA molecule binds across the dimer.

The protein resides in the cytoplasm. It catalyses the reaction tRNA(Ser) + L-serine + ATP = L-seryl-tRNA(Ser) + AMP + diphosphate + H(+). The enzyme catalyses tRNA(Sec) + L-serine + ATP = L-seryl-tRNA(Sec) + AMP + diphosphate + H(+). It participates in aminoacyl-tRNA biosynthesis; selenocysteinyl-tRNA(Sec) biosynthesis; L-seryl-tRNA(Sec) from L-serine and tRNA(Sec): step 1/1. Its function is as follows. Catalyzes the attachment of serine to tRNA(Ser). Is also able to aminoacylate tRNA(Sec) with serine, to form the misacylated tRNA L-seryl-tRNA(Sec), which will be further converted into selenocysteinyl-tRNA(Sec). The chain is Serine--tRNA ligase from Ehrlichia canis (strain Jake).